The sequence spans 2511 residues: Fatty acid synthase (2511 aa).

The residue at position 1 (Met-1) is an N-acetylmethionine. A Ketosynthase family 3 (KS3) domain is found at 1–406; it reads MEEVVIAGMS…GSNVHIILRP (406 aa). The residue at position 63 (Ser-63) is a Phosphoserine. Lys-70 is modified (N6-acetyllysine). The active-site For beta-ketoacyl synthase activity is the Cys-161. Ser-207 bears the Phosphoserine mark. His-293 acts as the For beta-ketoacyl synthase activity in catalysis. At Lys-298 the chain carries N6-acetyllysine. His-331 acts as the For beta-ketoacyl synthase activity in catalysis. The segment at 429-817 is acyl and malonyl transferases; that stretch reads RTPEAVQKLL…IDANPNALFP (389 aa). Residues Lys-436 and Lys-528 each carry the N6-acetyllysine modification. Ser-581 functions as the For malonyltransferase activity in the catalytic mechanism. An acyl-CoA is bound by residues 647 to 648 and Phe-671; that span reads DT. Residue Lys-673 is modified to N6-acetyllysine. A Phosphoserine modification is found at Ser-725. Position 773 (Arg-773) interacts with an acyl-CoA. Residues 838–966 form an N-terminal hotdog fold region; it reads HSLAWDVPAA…KVYQWDDPDP (129 aa). One can recognise a PKS/mFAS DH domain in the interval 838 to 1108; the sequence is HSLAWDVPAA…TESAPRRQQE (271 aa). His-878 serves as the catalytic Proton acceptor; for dehydratase activity. Positions 981-1108 are C-terminal hotdog fold; the sequence is EPLFLAQAEV…TESAPRRQQE (128 aa). Lys-992 bears the N6-acetyllysine mark. Catalysis depends on Asp-1031, which acts as the Proton donor; for dehydratase activity. Phosphoserine is present on residues Ser-1174 and Ser-1411. S-nitrosocysteine is present on Cys-1471. 2 positions are modified to phosphoserine: Ser-1584 and Ser-1594. Residues 1635–1863 form an enoyl reductase region; that stretch reads DVPSNWTLEE…VQVLAEEPEA (229 aa). 1671–1688 contributes to the NADP(+) binding site; sequence LLIHSGSGGVGQAAIAIA. The residue at position 1704 (Lys-1704) is an N6-(pyridoxal phosphate)lysine; alternate. Lys-1704 is subject to N6-acetyllysine; alternate. N6-acetyllysine is present on residues Lys-1771 and Lys-1847. The interval 1864-2118 is beta-ketoacyl reductase; that stretch reads VLKGAKPKLM…FVLAEKAAAY (255 aa). 1886-1901 serves as a coordination point for NADP(+); it reads SYIIAGGLGGFGLELA. Position 1995 is an N6-acetyllysine (Lys-1995). S-nitrosocysteine is present on Cys-2091. The region spanning 2121 to 2198 is the Carrier domain; that stretch reads RDSQRDLVEA…ELSSKADEAS (78 aa). Ser-2156 bears the O-(pantetheine 4'-phosphoryl)serine; alternate mark. Position 2156 is a phosphoserine; alternate (Ser-2156). Ser-2198 is subject to Phosphoserine. A phosphothreonine mark is found at Thr-2204 and Thr-2215. The segment at 2207 to 2511 is thioesterase; that stretch reads EDGLAQQQTQ…AEPRVSVREG (305 aa). Ser-2236 is subject to Phosphoserine. Ser-2308 serves as the catalytic For thioesterase activity. Lys-2391 is modified (N6-acetyllysine). Residue Lys-2449 forms a Glycyl lysine isopeptide (Lys-Gly) (interchain with G-Cter in SUMO2) linkage. His-2481 serves as the catalytic For thioesterase activity.

In terms of assembly, homodimer which is arranged in a head to tail fashion. Interacts with CEACAM1; this interaction is insulin and phosphorylation-dependent; reduces fatty-acid synthase activity. Post-translationally, S-nitrosylation of Fatty acid synthase at cysteine residues Cys-1471 or Cys-2091 is important for the enzyme dimerization. In adipocytes, S-nitrosylation of Fatty acid synthase occurs under physiological conditions and gradually increases during adipogenesis. In terms of tissue distribution, ubiquitous. Prominent expression in brain, lung, liver and mammary gland.

It localises to the cytoplasm. It is found in the melanosome. The enzyme catalyses acetyl-CoA + n malonyl-CoA + 2n NADPH + 2n H(+) = a long-chain fatty acid + (n+1) CoA + n CO2 + 2n NADP(+).. It catalyses the reaction holo-[ACP] + acetyl-CoA = acetyl-[ACP] + CoA. It carries out the reaction holo-[ACP] + malonyl-CoA = malonyl-[ACP] + CoA. The catalysed reaction is a fatty acyl-[ACP] + malonyl-[ACP] + H(+) = a 3-oxoacyl-[ACP] + holo-[ACP] + CO2. The enzyme catalyses a (3R)-hydroxyacyl-[ACP] + NADP(+) = a 3-oxoacyl-[ACP] + NADPH + H(+). It catalyses the reaction a (3R)-hydroxyacyl-[ACP] = a (2E)-enoyl-[ACP] + H2O. It carries out the reaction a 2,3-saturated acyl-[ACP] + NADP(+) = a (2E)-enoyl-[ACP] + NADPH + H(+). The catalysed reaction is hexadecanoyl-[ACP] + H2O = hexadecanoate + holo-[ACP] + H(+). The enzyme catalyses acetyl-[ACP] + malonyl-[ACP] + H(+) = 3-oxobutanoyl-[ACP] + holo-[ACP] + CO2. It catalyses the reaction 3-oxobutanoyl-[ACP] + NADPH + H(+) = (3R)-hydroxybutanoyl-[ACP] + NADP(+). It carries out the reaction (3R)-hydroxybutanoyl-[ACP] = (2E)-butenoyl-[ACP] + H2O. The catalysed reaction is (2E)-butenoyl-[ACP] + NADPH + H(+) = butanoyl-[ACP] + NADP(+). The enzyme catalyses butanoyl-[ACP] + malonyl-[ACP] + H(+) = 3-oxohexanoyl-[ACP] + holo-[ACP] + CO2. It catalyses the reaction 3-oxohexanoyl-[ACP] + NADPH + H(+) = (3R)-hydroxyhexanoyl-[ACP] + NADP(+). It carries out the reaction (3R)-hydroxyhexanoyl-[ACP] = (2E)-hexenoyl-[ACP] + H2O. The catalysed reaction is (2E)-hexenoyl-[ACP] + NADPH + H(+) = hexanoyl-[ACP] + NADP(+). The enzyme catalyses hexanoyl-[ACP] + malonyl-[ACP] + H(+) = 3-oxooctanoyl-[ACP] + holo-[ACP] + CO2. It catalyses the reaction 3-oxooctanoyl-[ACP] + NADPH + H(+) = (3R)-hydroxyoctanoyl-[ACP] + NADP(+). It carries out the reaction (3R)-hydroxyoctanoyl-[ACP] = (2E)-octenoyl-[ACP] + H2O. The catalysed reaction is (2E)-octenoyl-[ACP] + NADPH + H(+) = octanoyl-[ACP] + NADP(+). The enzyme catalyses octanoyl-[ACP] + malonyl-[ACP] + H(+) = 3-oxodecanoyl-[ACP] + holo-[ACP] + CO2. It catalyses the reaction 3-oxodecanoyl-[ACP] + NADPH + H(+) = (3R)-hydroxydecanoyl-[ACP] + NADP(+). It carries out the reaction (3R)-hydroxydecanoyl-[ACP] = (2E)-decenoyl-[ACP] + H2O. The catalysed reaction is (2E)-decenoyl-[ACP] + NADPH + H(+) = decanoyl-[ACP] + NADP(+). The enzyme catalyses decanoyl-[ACP] + malonyl-[ACP] + H(+) = 3-oxododecanoyl-[ACP] + holo-[ACP] + CO2. It catalyses the reaction 3-oxododecanoyl-[ACP] + NADPH + H(+) = (3R)-hydroxydodecanoyl-[ACP] + NADP(+). It carries out the reaction (3R)-hydroxydodecanoyl-[ACP] = (2E)-dodecenoyl-[ACP] + H2O. The catalysed reaction is (2E)-dodecenoyl-[ACP] + NADPH + H(+) = dodecanoyl-[ACP] + NADP(+). The enzyme catalyses dodecanoyl-[ACP] + malonyl-[ACP] + H(+) = 3-oxotetradecanoyl-[ACP] + holo-[ACP] + CO2. It catalyses the reaction 3-oxotetradecanoyl-[ACP] + NADPH + H(+) = (3R)-hydroxytetradecanoyl-[ACP] + NADP(+). It carries out the reaction (3R)-hydroxytetradecanoyl-[ACP] = (2E)-tetradecenoyl-[ACP] + H2O. The catalysed reaction is (2E)-tetradecenoyl-[ACP] + NADPH + H(+) = tetradecanoyl-[ACP] + NADP(+). The enzyme catalyses tetradecanoyl-[ACP] + malonyl-[ACP] + H(+) = 3-oxohexadecanoyl-[ACP] + holo-[ACP] + CO2. It catalyses the reaction 3-oxohexadecanoyl-[ACP] + NADPH + H(+) = (3R)-hydroxyhexadecanoyl-[ACP] + NADP(+). It carries out the reaction (3R)-hydroxyhexadecanoyl-[ACP] = (2E)-hexadecenoyl-[ACP] + H2O. The catalysed reaction is (2E)-hexadecenoyl-[ACP] + NADPH + H(+) = hexadecanoyl-[ACP] + NADP(+). The enzyme catalyses hexadecanoyl-[ACP] + malonyl-[ACP] + H(+) = 3-oxooctadecanoyl-[ACP] + holo-[ACP] + CO2. It catalyses the reaction 3-oxooctadecanoyl-[ACP] + NADPH + H(+) = (3R)-hydroxyoctadecanoyl-[ACP] + NADP(+). It carries out the reaction (3R)-hydroxyoctadecanoyl-[ACP] = (2E)-octadecenoyl-[ACP] + H2O. The catalysed reaction is (2E)-octadecenoyl-[ACP] + NADPH + H(+) = octadecanoyl-[ACP] + NADP(+). The enzyme catalyses tetradecanoyl-[ACP] + H2O = tetradecanoate + holo-[ACP] + H(+). It catalyses the reaction octadecanoyl-[ACP] + H2O = octadecanoate + holo-[ACP] + H(+). It functions in the pathway lipid metabolism; fatty acid biosynthesis. Its activity is regulated as follows. Activated by S-nitrosylation which promotes enzyme dimerization. Cerulenin, a potent non-competitive pharmacological inhibitor of FAS, binds covalently to the active site of the condensing enzyme region, inactivating a key enzyme step in fatty acid synthesis. In terms of biological role, fatty acid synthetase is a multifunctional enzyme that catalyzes the de novo biosynthesis of long-chain saturated fatty acids starting from acetyl-CoA and malonyl-CoA in the presence of NADPH. This multifunctional protein contains 7 catalytic activities and a site for the binding of the prosthetic group 4'-phosphopantetheine of the acyl carrier protein ([ACP]) domain. Functionally, (Microbial infection) Fatty acid synthetase activity is required for SARS coronavirus-2/SARS-CoV-2 replication. The protein is Fatty acid synthase (FASN) of Homo sapiens (Human).